The chain runs to 220 residues: Small ribosomal subunit protein uS3c (220 aa).

Positions 43-120 (IQHYVEKNTR…RLNIAIIRVA (78 aa)) constitute a KH type-2 domain.

Belongs to the universal ribosomal protein uS3 family. As to quaternary structure, part of the 30S ribosomal subunit.

It localises to the plastid. The protein localises to the chloroplast. The sequence is that of Small ribosomal subunit protein uS3c (rps3) from Piper cenocladum (Ant piper).